An 864-amino-acid polypeptide reads, in one-letter code: Leucine--tRNA ligase (864 aa).

The short motif at 42–52 (PYPSGKLHMGH) is the 'HIGH' region element. A 'KMSKS' region motif is present at residues 624–628 (KMSKS). Lysine 627 contacts ATP.

The protein belongs to the class-I aminoacyl-tRNA synthetase family.

The protein localises to the cytoplasm. The enzyme catalyses tRNA(Leu) + L-leucine + ATP = L-leucyl-tRNA(Leu) + AMP + diphosphate. This Paraburkholderia phymatum (strain DSM 17167 / CIP 108236 / LMG 21445 / STM815) (Burkholderia phymatum) protein is Leucine--tRNA ligase.